Reading from the N-terminus, the 758-residue chain is Relaxin receptor 1 (758 aa).

The Extracellular portion of the chain corresponds to 1-409 (MTSGPFFFCI…ENLLASIIQR (409 aa)). In terms of domain architecture, LDL-receptor class A spans 26-63 (SCPLGSFPCGNMSRCLPQLLHCNGVDDCGNRADEDHCG). 3 cysteine pairs are disulfide-bonded: cysteine 27/cysteine 40, cysteine 34/cysteine 53, and cysteine 47/cysteine 62. An N-linked (GlcNAc...) asparagine glycan is attached at asparagine 36. Residues leucine 45, asparagine 48, valine 50, aspartate 52, aspartate 58, and glutamate 59 each coordinate Ca(2+). Asparagine 127 carries an N-linked (GlcNAc...) asparagine glycan. 10 LRR repeats span residues 127 to 148 (NVTV…GFRK), 151 to 172 (ELQK…AFRG), 175 to 196 (SLTK…VFED), 199 to 220 (RLEW…TFYG), 223 to 244 (SLIL…PLCQ), 248 to 269 (RLHW…TFIS), 272 to 293 (NLTV…AFTH), 296 to 317 (KLDE…IFKD), 320 to 341 (ELSQ…QFDC), and 344 to 365 (KLKS…MFRP). N-linked (GlcNAc...) asparagine glycans are attached at residues asparagine 264 and asparagine 272. N-linked (GlcNAc...) asparagine glycosylation occurs at asparagine 325. An N-linked (GlcNAc...) asparagine glycan is attached at asparagine 368. A helical transmembrane segment spans residues 410-430 (VFVWVVSAITCFGNIFVICMR). Topologically, residues 431 to 443 (PYIRSENKLHAMS) are cytoplasmic. The helical transmembrane segment at 444-464 (IISLCCADCLMGVYLFVIGAF) threads the bilayer. The Extracellular segment spans residues 465–486 (DLKFRGEYNKHAQPWMESVHCQ). A disulfide bridge links cysteine 485 with cysteine 563. A helical membrane pass occupies residues 487–507 (FMGSLAILSTEVSVLLLTFLT). The Cytoplasmic segment spans residues 508–527 (LEKYICIVYPFRCLRPRKCR). Residues 528-548 (TITVLIFIWIIGFIVAFAPLG) form a helical membrane-spanning segment. Residues 549–577 (NKEFFKNYYGTNGVCFPLHSEDTGSTGAQ) are Extracellular-facing. The chain crosses the membrane as a helical span at residues 578-598 (IYSVVIFLGINLVAFIIIVFS). Over 599–629 (YGSMFYSVHQSSVTVTEIQKQVKKEVVLAKR) the chain is Cytoplasmic. Residues 630–650 (FFFIVFTDALCWIPIFILKFL) traverse the membrane as a helical segment. Serine 651 is a topological domain (extracellular). A helical membrane pass occupies residues 652 to 672 (LLQVEIPDSITSWVVIFILPI). Residues 673–758 (NSALNPIIYT…SQSSRLNSYS (86 aa)) lie on the Cytoplasmic side of the membrane.

This sequence belongs to the G-protein coupled receptor 1 family. In terms of assembly, interacts with C1QTNF8.

Its subcellular location is the cell membrane. Its function is as follows. Receptor for relaxins. The activity of this receptor is mediated by G proteins leading to stimulation of adenylate cyclase and an increase of cAMP. Binding of the ligand may also activate a tyrosine kinase pathway that inhibits the activity of a phosphodiesterase that degrades cAMP. This chain is Relaxin receptor 1 (Rxfp1), found in Mus musculus (Mouse).